The chain runs to 120 residues: C-type natriuretic peptide 4 (120 aa).

The N-terminal stretch at 1-22 (MNLSYLVACGLMITLLSVRMGA) is a signal peptide. Positions 23–96 (KPLSQAQQKS…PRRHKTGIKK (74 aa)) are excised as a propeptide. Residues Cys104 and Cys120 are joined by a disulfide bond.

It belongs to the natriuretic peptide family.

It localises to the secreted. Functionally, exhibits natriuretic and vasodepressant activity. Has cGMP-stimulating activity. May help to regulate body fluid homeostasis in a variety of aquatic environments. The sequence is that of C-type natriuretic peptide 4 from Takifugu rubripes (Japanese pufferfish).